A 304-amino-acid polypeptide reads, in one-letter code: Glutaminase (304 aa).

Substrate-binding residues include Ser63, Asn113, Glu157, Asn164, Tyr188, Tyr240, and Val258.

This sequence belongs to the glutaminase family. As to quaternary structure, homotetramer.

The catalysed reaction is L-glutamine + H2O = L-glutamate + NH4(+). The chain is Glutaminase from Paraburkholderia phytofirmans (strain DSM 17436 / LMG 22146 / PsJN) (Burkholderia phytofirmans).